The primary structure comprises 850 residues: Mitogen-activated protein kinase kinase kinase 11 (850 aa).

A Phosphoserine modification is found at Ser11. The interval 16 to 35 is disordered; sequence WNGSGSGGGGGTGGVRPEGS. Over residues 17–31 the composition is skewed to gly residues; it reads NGSGSGGGGGTGGVR. Ser35 is modified (phosphoserine). The region spanning 42-106 is the SH3 domain; the sequence is YANPVWTALF…PSNYVSRGGG (65 aa). Residues 118 to 380 form the Protein kinase domain; it reads LRLEEVIGIG…ASILQQLEAL (263 aa). Residues 124–132 and Lys145 each bind ATP; that span reads IGIGGFGKV. The Proton acceptor role is filled by Asp242. Phosphothreonine; by autocatalysis is present on Thr278. The residue at position 282 (Ser282) is a Phosphoserine; by autocatalysis and MAP4K1. Ser395 is subject to Phosphoserine. Leucine-zipper stretches follow at residues 404–425 and 439–460; these read IQGLFDELRAKEKELLSREEEL and LRRREHLLAQWELEVFERELTL. A phosphoserine mark is found at Ser508 and Ser525. The interval 535–644 is disordered; the sequence is QLEPTESGQT…SSGTPKLIQR (110 aa). Positions 538-547 are enriched in polar residues; sequence PTESGQTWGR. Ser549, Ser556, and Ser557 each carry phosphoserine. Residues 551 to 563 show a composition bias toward basic and acidic residues; the sequence is RRLEDSSNGERRA. The span at 598 to 610 shows a compositional bias: low complexity; sequence SSPLGSPSTPPAL. The residue at position 655 (Ser655) is a Phosphoserine. The disordered stretch occupies residues 657–850; sequence GLGRDLQPPG…QAPWAPEAGP (194 aa). Over residues 677 to 693 the composition is skewed to pro residues; the sequence is TAPPPAQMPSPCPPELP. Polar residues predominate over residues 700–711; the sequence is LSQTTPDAHSSP. At Ser709 the chain carries Phosphoserine. At Thr712 the chain carries Phosphothreonine. Ser728, Ser731, Ser743, Ser751, Ser761, Ser773, Ser792, Ser796, and Ser818 each carry phosphoserine. A compositionally biased stretch (low complexity) spans 763–776; sequence PLGLISRPRPSPLR. A compositionally biased stretch (pro residues) spans 790–802; that stretch reads RPSPLPSPQPAPR. Residues 803-819 are compositionally biased toward low complexity; the sequence is RAPWTLFPDSDPFWDSP.

This sequence belongs to the protein kinase superfamily. STE Ser/Thr protein kinase family. MAP kinase kinase kinase subfamily. Homodimer; undergoes dimerization during activation. Interacts with MAP2K4/MKK4 and MAP2K7/MKK7. Found in a complex with SH3RF1, RAC1, MAP2K7/MKK7, MAPK8IP1/JIP1 and MAPK8/JNK1. It depends on Mg(2+) as a cofactor. In terms of processing, autophosphorylation on serine and threonine residues within the activation loop plays a role in enzyme activation. Thr-278 is likely to be the main autophosphorylation site. Phosphorylation of Ser-556 and Ser-557 is induced by CDC42.

Its subcellular location is the cytoplasm. The protein localises to the cytoskeleton. It localises to the microtubule organizing center. The protein resides in the centrosome. The catalysed reaction is L-seryl-[protein] + ATP = O-phospho-L-seryl-[protein] + ADP + H(+). It carries out the reaction L-threonyl-[protein] + ATP = O-phospho-L-threonyl-[protein] + ADP + H(+). Its activity is regulated as follows. Homodimerization via the leucine zipper domains is required for autophosphorylation and subsequent activation. In terms of biological role, activates the JUN N-terminal pathway. Required for serum-stimulated cell proliferation and for mitogen and cytokine activation of MAPK14 (p38), MAPK3 (ERK) and MAPK8 (JNK1) through phosphorylation and activation of MAP2K4/MKK4 and MAP2K7/MKK7. Plays a role in mitogen-stimulated phosphorylation and activation of BRAF, but does not phosphorylate BRAF directly. Influences microtubule organization during the cell cycle. This is Mitogen-activated protein kinase kinase kinase 11 (Map3k11) from Mus musculus (Mouse).